The sequence spans 131 residues: Small ribosomal subunit protein uS8 (131 aa).

This sequence belongs to the universal ribosomal protein uS8 family. As to quaternary structure, part of the 30S ribosomal subunit. Contacts proteins S5 and S12.

In terms of biological role, one of the primary rRNA binding proteins, it binds directly to 16S rRNA central domain where it helps coordinate assembly of the platform of the 30S subunit. This chain is Small ribosomal subunit protein uS8, found in Bacteroides thetaiotaomicron (strain ATCC 29148 / DSM 2079 / JCM 5827 / CCUG 10774 / NCTC 10582 / VPI-5482 / E50).